The sequence spans 57 residues: uncharacterized protein (57 aa).

A helical transmembrane segment spans residues 15-37 (GLAGLICIGLTISSGFSGSSILI).

It localises to the membrane. This is an uncharacterized protein from Dictyostelium discoideum (Social amoeba).